Reading from the N-terminus, the 516-residue chain is MSTIKFLRSSTHNALRSSLGWCRLAASRPRYDYDLVVLGGGSAGLACAKEAAGCGARVLCFDYVKPTPVGTKWGIGGTCVNVGCIPKKLMHQASLLGEAVHEAVAYGWNVDDTNIRPDWRKLVRSVQNHIKSVNWVTRVDLRDKKVEYVNSMATFRDSHTIEYVAMPGAEHRQVTSEYVVVAVGGRPRYPDIPGAVELGITSDDIFSYEREPGRTLVVGAGYVGLECACFLKGLGYEPTVMVRSIVLRGFDRQMSELLAAMMTERGIPFLGTTIPKAVERQADGRLLVRYRNTTTQMDGSDVFDTVLWAIGRKGLIEDLNLDAAGVKTHDDKIVVDAAEATSVPHIFAVGDIIYGRPELTPVAILSGRLLARRLFAGSTQLMDYADVATTVFTPLEYSCVGMSEETAIELRGADNIEVFHGYYKPTEFFIPQKSVRHCYLKAVAEVSGDQKILGLHYIGPVAGEVIQGFAAALKTGLTVKTLLNTVGIHPTTAEEFTRLSITKRSGRDPTPASCCS.

Residue 62–79 (DYVKPTPVGTKWGIGGTC) participates in FAD binding. C79 and C84 form a disulfide bridge. The Proton acceptor role is filled by H489.

The protein belongs to the class-I pyridine nucleotide-disulfide oxidoreductase family. As to quaternary structure, homodimer. The cofactor is FAD.

It is found in the mitochondrion. It carries out the reaction [thioredoxin]-dithiol + NADP(+) = [thioredoxin]-disulfide + NADPH + H(+). Thioredoxin system is a major player in glutathione metabolism, due to the demonstrated absence of a glutathione reductase. Functionally interacts with the Sod/Cat reactive oxidation species (ROS) defense system and thereby has a role in preadult development and life span. Lack of a glutathione reductase suggests antioxidant defense in Drosophila, and probably in related insects, differs fundamentally from that in other organisms. In Drosophila melanogaster (Fruit fly), this protein is Thioredoxin reductase 2, mitochondrial.